A 208-amino-acid polypeptide reads, in one-letter code: Probable nicotinate-nucleotide adenylyltransferase (208 aa).

It belongs to the NadD family.

It carries out the reaction nicotinate beta-D-ribonucleotide + ATP + H(+) = deamido-NAD(+) + diphosphate. It functions in the pathway cofactor biosynthesis; NAD(+) biosynthesis; deamido-NAD(+) from nicotinate D-ribonucleotide: step 1/1. In terms of biological role, catalyzes the reversible adenylation of nicotinate mononucleotide (NaMN) to nicotinic acid adenine dinucleotide (NaAD). The sequence is that of Probable nicotinate-nucleotide adenylyltransferase from Nostoc sp. (strain PCC 7120 / SAG 25.82 / UTEX 2576).